The following is a 393-amino-acid chain: Major outer membrane protein P.IA (393 aa).

The N-terminal stretch at 1-19 (MRKKLTALVLSALPLAAVA) is a signal peptide.

The protein belongs to the Gram-negative porin family. As to quaternary structure, homotrimer.

It localises to the cell outer membrane. Its function is as follows. Serves as a slightly cation selective porin. Major antigen on the gonococcal cell surface and it may have pathogenic properties in addition to its porin activity. This is Major outer membrane protein P.IA (porA) from Neisseria meningitidis serogroup C.